The chain runs to 192 residues: Interleukin-18 (192 aa).

Residues 1–35 (MAAMSEDSCVNFKEMMFIDNTLYFIPEENGDLESD) constitute a propeptide that is removed on maturation.

This sequence belongs to the IL-1 family. Forms a ternary complex with ligand-binding receptor subunit IL18R1 and signaling receptor subunit IL18RAP at the plasma membrane. Mature IL18 first binds to IL18R1 forming a low affinity binary complex, which then interacts with IL18RAP to form a high affinity ternary complex that signals inside the cell. Interacts with cargo receptor TMED10; the interaction mediates the translocation from the cytoplasm into the ERGIC (endoplasmic reticulum-Golgi intermediate compartment) and thereby secretion. In terms of processing, the pro-IL-18 precursor is processed by CASP1 to yield its mature, active form. The pro-IL-18 precursor is however not processed by Casp4/Casp11 in rodents. The pro-IL-18 precursor features autoinhibitory interactions between the propeptide and the post-cleavage-site region, preventing recognition by the IL18R1 receptor. Processing by CASP1 induces conformational changes to generate critical receptor-binding sites. The mature form is then secreted and released in the extracellular milieu by passing through the gasdermin-D (GSDMD) pore. In contrast, cleavage by CASP3 inactivates IL18.

It localises to the cytoplasm. It is found in the secreted. Functionally, pro-inflammatory cytokine primarily involved in epithelial barrier repair, polarized T-helper 1 (Th1) cell and natural killer (NK) cell immune responses. Upon binding to IL18R1 and IL18RAP, forms a signaling ternary complex which activates NF-kappa-B, triggering synthesis of inflammatory mediators. Synergizes with IL12/interleukin-12 to induce IFNG synthesis from T-helper 1 (Th1) cells and natural killer (NK) cells. Involved in transduction of inflammation downstream of pyroptosis: its mature form is specifically released in the extracellular milieu by passing through the gasdermin-D (GSDMD) pore. The polypeptide is Interleukin-18 (Mus musculus (Mouse)).